The chain runs to 66 residues: Small ribosomal subunit protein eS27 (66 aa).

The Zn(2+) site is built by cysteine 21, cysteine 24, cysteine 40, and cysteine 43. The C4-type zinc finger occupies 21–43 (CRQCNNEQVIFSNATFPVRCLSC).

It belongs to the eukaryotic ribosomal protein eS27 family. In terms of assembly, part of the 30S ribosomal subunit. Zn(2+) serves as cofactor.

The polypeptide is Small ribosomal subunit protein eS27 (Sulfolobus acidocaldarius (strain ATCC 33909 / DSM 639 / JCM 8929 / NBRC 15157 / NCIMB 11770)).